Here is a 185-residue protein sequence, read N- to C-terminus: ATP-dependent protease subunit HslV (185 aa).

T12 is an active-site residue. Na(+) contacts are provided by A168, C171, and T174.

It belongs to the peptidase T1B family. HslV subfamily. A double ring-shaped homohexamer of HslV is capped on each side by a ring-shaped HslU homohexamer. The assembly of the HslU/HslV complex is dependent on binding of ATP.

Its subcellular location is the cytoplasm. The catalysed reaction is ATP-dependent cleavage of peptide bonds with broad specificity.. Its activity is regulated as follows. Allosterically activated by HslU binding. Its function is as follows. Protease subunit of a proteasome-like degradation complex believed to be a general protein degrading machinery. The sequence is that of ATP-dependent protease subunit HslV from Ruegeria pomeroyi (strain ATCC 700808 / DSM 15171 / DSS-3) (Silicibacter pomeroyi).